The chain runs to 423 residues: Gamma-glutamyl phosphate reductase (423 aa).

It belongs to the gamma-glutamyl phosphate reductase family.

The protein resides in the cytoplasm. The enzyme catalyses L-glutamate 5-semialdehyde + phosphate + NADP(+) = L-glutamyl 5-phosphate + NADPH + H(+). It functions in the pathway amino-acid biosynthesis; L-proline biosynthesis; L-glutamate 5-semialdehyde from L-glutamate: step 2/2. Its function is as follows. Catalyzes the NADPH-dependent reduction of L-glutamate 5-phosphate into L-glutamate 5-semialdehyde and phosphate. The product spontaneously undergoes cyclization to form 1-pyrroline-5-carboxylate. The chain is Gamma-glutamyl phosphate reductase from Pseudomonas fluorescens (strain Pf0-1).